Here is an 82-residue protein sequence, read N- to C-terminus: Small ribosomal subunit protein uS17c (82 aa).

The protein belongs to the universal ribosomal protein uS17 family. Part of the 30S ribosomal subunit.

Its subcellular location is the plastid. The protein resides in the chloroplast. Its function is as follows. One of the primary rRNA binding proteins, it binds specifically to the 5'-end of 16S ribosomal RNA. This is Small ribosomal subunit protein uS17c (rps17) from Cyanidioschyzon merolae (strain NIES-3377 / 10D) (Unicellular red alga).